Here is a 695-residue protein sequence, read N- to C-terminus: WD repeat-containing protein 93 (695 aa).

The disordered stretch occupies residues 1–35 (MSSFKGNQAQKRRLSVFPKGPLEIPSPTEADWPKD). Residues 421–460 (PCAAPIVMSQISSFSSYLALVCEDGVLILWDLAEGFLFGV) form a WD repeat.

As to expression, testis-specific. Expressed in spermatogonia, spermatocytes and spermatids.

The chain is WD repeat-containing protein 93 (Wdr93) from Mus musculus (Mouse).